The chain runs to 65 residues: uncharacterized protein (65 aa).

The disordered stretch occupies residues 24–65 (NNNNNNNNNNNNNNNNNNNNNNNNNNNNNNNKNNKNNNKNND).

This is an uncharacterized protein from Dictyostelium discoideum (Social amoeba).